Here is a 351-residue protein sequence, read N- to C-terminus: MKNSNKLIASVVTLASVMALAACQSTNDNTKVISMKGDTISVSDFYNETKNTEVSQKAMLNLVISRVFEAQYGDKVSKKEVEKAYHKTAEQYGASFSAALAQSSLTPETFKRQIRSSKLVEHAVKEAAKKELTTQEYKKAYESYTPTMAVEMITLDNEETAKSVLEELKAEGADFTAIAKEKTTTPEKKVTYKFDSGATNVPTDVVKAASSLNEGGISDVISVLDPTSYQKKFYIVKVTKKAEKKSDWQEYKKRLKAIIIAEKSKDMNFQNKVIANALDKANVKIKDKAFANILAQYANLGQKTKAASESSTTSESSKAAEENPSESEQTQTSSAEEPTETEAQTQEPAAQ.

The first 22 residues, 1–22 (MKNSNKLIASVVTLASVMALAA), serve as a signal peptide directing secretion. Cys23 carries the N-palmitoyl cysteine lipid modification. The S-diacylglycerol cysteine moiety is linked to residue Cys23. Residues 145–240 (TPTMAVEMIT…KKFYIVKVTK (96 aa)) enclose the PpiC domain. Low complexity-rich tracts occupy residues 303–317 (KTKAASESSTTSESS) and 326–351 (ESEQTQTSSAEEPTETEAQTQEPAAQ). The interval 303–351 (KTKAASESSTTSESSKAAEENPSESEQTQTSSAEEPTETEAQTQEPAAQ) is disordered.

Belongs to the PrsA family.

It is found in the cell membrane. It carries out the reaction [protein]-peptidylproline (omega=180) = [protein]-peptidylproline (omega=0). In terms of biological role, plays a major role in protein secretion by helping the post-translocational extracellular folding of several secreted proteins. This Streptococcus pyogenes serotype M6 (strain ATCC BAA-946 / MGAS10394) protein is Foldase protein PrsA 1.